Reading from the N-terminus, the 496-residue chain is Probable cytosol aminopeptidase (496 aa).

The Mn(2+) site is built by Lys-266 and Asp-271. Lys-278 is a catalytic residue. Residues Asp-289, Asp-348, and Glu-350 each contribute to the Mn(2+) site. Arg-352 is an active-site residue.

It belongs to the peptidase M17 family. Mn(2+) is required as a cofactor.

Its subcellular location is the cytoplasm. It carries out the reaction Release of an N-terminal amino acid, Xaa-|-Yaa-, in which Xaa is preferably Leu, but may be other amino acids including Pro although not Arg or Lys, and Yaa may be Pro. Amino acid amides and methyl esters are also readily hydrolyzed, but rates on arylamides are exceedingly low.. The enzyme catalyses Release of an N-terminal amino acid, preferentially leucine, but not glutamic or aspartic acids.. Functionally, presumably involved in the processing and regular turnover of intracellular proteins. Catalyzes the removal of unsubstituted N-terminal amino acids from various peptides. The chain is Probable cytosol aminopeptidase from Pseudomonas syringae pv. tomato (strain ATCC BAA-871 / DC3000).